The following is a 104-amino-acid chain: Large ribosomal subunit protein bL21 (104 aa).

It belongs to the bacterial ribosomal protein bL21 family. In terms of assembly, part of the 50S ribosomal subunit. Contacts protein L20.

Its function is as follows. This protein binds to 23S rRNA in the presence of protein L20. This Leptospira borgpetersenii serovar Hardjo-bovis (strain JB197) protein is Large ribosomal subunit protein bL21.